The following is a 689-amino-acid chain: Transmembrane protein 214 (689 aa).

Disordered stretches follow at residues 1–37 (MATKTAGVGRWEVVKKGRRPGVGAGAGGRGGGRNRRA) and 70–107 (RQNKEQVPPPAVEPKKPGNKKQPKKVATPPNQNQKQGR). Ala-2 carries the N-acetylalanine modification. The segment covering 20–31 (PGVGAGAGGRGG) has biased composition (gly residues). N-linked (GlcNAc...) asparagine glycans are attached at residues Asn-269 and Asn-307. A run of 2 helical transmembrane segments spans residues 480 to 500 (LPWTRLLLLLLVFAVGFLCHD) and 616 to 636 (LPLLFHQNVLLPLWHLLLEAL).

This sequence belongs to the TMEM214 family. Constitutively interacts with CASP4; required for the localization of procaspase 4 to the ER.

The protein resides in the endoplasmic reticulum membrane. Its function is as follows. Critical mediator, in cooperation with CASP4, of endoplasmic reticulum-stress induced apoptosis. Required or the activation of CASP4 following endoplasmic reticulum stress. In Homo sapiens (Human), this protein is Transmembrane protein 214 (TMEM214).